The sequence spans 485 residues: Glutamyl-tRNA(Gln) amidotransferase subunit A (485 aa).

Catalysis depends on charge relay system residues Lys79 and Ser154. Ser178 serves as the catalytic Acyl-ester intermediate.

Belongs to the amidase family. GatA subfamily. In terms of assembly, heterotrimer of A, B and C subunits.

It carries out the reaction L-glutamyl-tRNA(Gln) + L-glutamine + ATP + H2O = L-glutaminyl-tRNA(Gln) + L-glutamate + ADP + phosphate + H(+). Allows the formation of correctly charged Gln-tRNA(Gln) through the transamidation of misacylated Glu-tRNA(Gln) in organisms which lack glutaminyl-tRNA synthetase. The reaction takes place in the presence of glutamine and ATP through an activated gamma-phospho-Glu-tRNA(Gln). The chain is Glutamyl-tRNA(Gln) amidotransferase subunit A from Desulforamulus reducens (strain ATCC BAA-1160 / DSM 100696 / MI-1) (Desulfotomaculum reducens).